A 500-amino-acid chain; its full sequence is Proline--tRNA ligase (500 aa).

It belongs to the class-II aminoacyl-tRNA synthetase family. ProS type 3 subfamily. Homodimer.

The protein localises to the cytoplasm. The enzyme catalyses tRNA(Pro) + L-proline + ATP = L-prolyl-tRNA(Pro) + AMP + diphosphate. In terms of biological role, catalyzes the attachment of proline to tRNA(Pro) in a two-step reaction: proline is first activated by ATP to form Pro-AMP and then transferred to the acceptor end of tRNA(Pro). The sequence is that of Proline--tRNA ligase from Paramagnetospirillum magneticum (strain ATCC 700264 / AMB-1) (Magnetospirillum magneticum).